The following is a 519-amino-acid chain: 2-isopropylmalate synthase (519 aa).

The 263-residue stretch at 12–274 (IRIFDTTLRD…DTSIHTSRIV (263 aa)) folds into the Pyruvate carboxyltransferase domain. The Mn(2+) site is built by Asp-21, His-209, His-211, and Asn-245. The tract at residues 396–519 (RLASMTISDV…MQNKQNTALA (124 aa)) is regulatory domain.

Belongs to the alpha-IPM synthase/homocitrate synthase family. LeuA type 1 subfamily. Homodimer. It depends on Mn(2+) as a cofactor.

The protein resides in the cytoplasm. It catalyses the reaction 3-methyl-2-oxobutanoate + acetyl-CoA + H2O = (2S)-2-isopropylmalate + CoA + H(+). Its pathway is amino-acid biosynthesis; L-leucine biosynthesis; L-leucine from 3-methyl-2-oxobutanoate: step 1/4. In terms of biological role, catalyzes the condensation of the acetyl group of acetyl-CoA with 3-methyl-2-oxobutanoate (2-ketoisovalerate) to form 3-carboxy-3-hydroxy-4-methylpentanoate (2-isopropylmalate). The protein is 2-isopropylmalate synthase of Xylella fastidiosa (strain M23).